An 876-amino-acid chain; its full sequence is Valine--tRNA ligase (876 aa).

Residues proline 44–histidine 54 carry the 'HIGH' region motif. The short motif at lysine 520–serine 524 is the 'KMSKS' region element. ATP is bound at residue lysine 523. The stretch at leucine 805–alanine 876 forms a coiled coil.

It belongs to the class-I aminoacyl-tRNA synthetase family. ValS type 1 subfamily. Monomer.

Its subcellular location is the cytoplasm. The enzyme catalyses tRNA(Val) + L-valine + ATP = L-valyl-tRNA(Val) + AMP + diphosphate. In terms of biological role, catalyzes the attachment of valine to tRNA(Val). As ValRS can inadvertently accommodate and process structurally similar amino acids such as threonine, to avoid such errors, it has a 'posttransfer' editing activity that hydrolyzes mischarged Thr-tRNA(Val) in a tRNA-dependent manner. The polypeptide is Valine--tRNA ligase (Staphylococcus aureus (strain JH1)).